The following is a 401-amino-acid chain: Elongation factor Tu (401 aa).

One can recognise a tr-type G domain in the interval 10–209 (KPHINVGTIG…AVDEYIPTPQ (200 aa)). The interval 19-26 (GHVDHGKT) is G1. A GTP-binding site is contributed by 19-26 (GHVDHGKT). Thr-26 contributes to the Mg(2+) binding site. Positions 60 to 64 (GITIA) are G2. Residues 81–84 (DCPG) form a G3 region. Residues 81–85 (DCPGH) and 136–139 (NKVD) each bind GTP. The interval 136-139 (NKVD) is G4. Residues 174 to 176 (SAR) form a G5 region.

The protein belongs to the TRAFAC class translation factor GTPase superfamily. Classic translation factor GTPase family. EF-Tu/EF-1A subfamily. As to quaternary structure, monomer.

It localises to the cytoplasm. It catalyses the reaction GTP + H2O = GDP + phosphate + H(+). Functionally, GTP hydrolase that promotes the GTP-dependent binding of aminoacyl-tRNA to the A-site of ribosomes during protein biosynthesis. The sequence is that of Elongation factor Tu from Chloroflexus aurantiacus (strain ATCC 29366 / DSM 635 / J-10-fl).